A 326-amino-acid chain; its full sequence is Tetraacyldisaccharide 4'-kinase (326 aa).

53 to 60 (SVGGNGKT) contacts ATP.

It belongs to the LpxK family.

It carries out the reaction a lipid A disaccharide + ATP = a lipid IVA + ADP + H(+). Its pathway is glycolipid biosynthesis; lipid IV(A) biosynthesis; lipid IV(A) from (3R)-3-hydroxytetradecanoyl-[acyl-carrier-protein] and UDP-N-acetyl-alpha-D-glucosamine: step 6/6. In terms of biological role, transfers the gamma-phosphate of ATP to the 4'-position of a tetraacyldisaccharide 1-phosphate intermediate (termed DS-1-P) to form tetraacyldisaccharide 1,4'-bis-phosphate (lipid IVA). The polypeptide is Tetraacyldisaccharide 4'-kinase (Actinobacillus pleuropneumoniae serotype 7 (strain AP76)).